A 122-amino-acid chain; its full sequence is Large ribosomal subunit protein uL18 (122 aa).

Belongs to the universal ribosomal protein uL18 family. As to quaternary structure, part of the 50S ribosomal subunit; part of the 5S rRNA/L5/L18/L25 subcomplex. Contacts the 5S and 23S rRNAs.

Its function is as follows. This is one of the proteins that bind and probably mediate the attachment of the 5S RNA into the large ribosomal subunit, where it forms part of the central protuberance. The protein is Large ribosomal subunit protein uL18 of Thermosipho africanus (strain TCF52B).